A 235-amino-acid polypeptide reads, in one-letter code: Regulator of G-protein signaling 18 (235 aa).

Phosphoserine is present on serine 49. The region spanning 86-202 is the RGS domain; the sequence is SFDKLLSHRD…LKSDIYLDLM (117 aa). Residues serine 216 and serine 218 each carry the phosphoserine modification.

As to expression, expressed in peripheral leukocytes, bone marrow, platelet, spleen and fetal liver.

It is found in the cytoplasm. In terms of biological role, inhibits signal transduction by increasing the GTPase activity of G protein alpha subunits thereby driving them into their inactive GDP-bound form. Binds to G(i) alpha-1, G(i) alpha-2, G(i) alpha-3 and G(q) alpha. The polypeptide is Regulator of G-protein signaling 18 (RGS18) (Homo sapiens (Human)).